A 305-amino-acid polypeptide reads, in one-letter code: Homoserine O-succinyltransferase (305 aa).

Cys-142 serves as the catalytic Acyl-thioester intermediate. Lys-163 and Ser-192 together coordinate substrate. Catalysis depends on His-235, which acts as the Proton acceptor. The active site involves Glu-237. Residue Arg-249 coordinates substrate.

The protein belongs to the MetA family.

The protein localises to the cytoplasm. It carries out the reaction L-homoserine + succinyl-CoA = O-succinyl-L-homoserine + CoA. It functions in the pathway amino-acid biosynthesis; L-methionine biosynthesis via de novo pathway; O-succinyl-L-homoserine from L-homoserine: step 1/1. Its function is as follows. Transfers a succinyl group from succinyl-CoA to L-homoserine, forming succinyl-L-homoserine. In Psychromonas ingrahamii (strain DSM 17664 / CCUG 51855 / 37), this protein is Homoserine O-succinyltransferase.